Here is a 437-residue protein sequence, read N- to C-terminus: Trigger factor (437 aa).

Residues 161–246 (DDQVNIDFVG…VNSVSAPQLP (86 aa)) enclose the PPIase FKBP-type domain.

This sequence belongs to the FKBP-type PPIase family. Tig subfamily.

It is found in the cytoplasm. The catalysed reaction is [protein]-peptidylproline (omega=180) = [protein]-peptidylproline (omega=0). Its function is as follows. Involved in protein export. Acts as a chaperone by maintaining the newly synthesized protein in an open conformation. Functions as a peptidyl-prolyl cis-trans isomerase. The sequence is that of Trigger factor from Pseudomonas putida (strain W619).